Reading from the N-terminus, the 276-residue chain is MTTTLEEQLSDKLQMMDETTDKVQGSSKQKDDSSIAASSDAKTASPSSSDSSTKVAAPESEFYNKAQKYWSEVPATVNGMLGGLGYISAIDIQGSNVFLREIRVPGNRLALDCGAGIGRVTRNLLIPRFSCVDLVEQDPAFADKAREYCTSEDGSRGKVGQIYNVGLQKFTPTQQYDLVWTQWVLGHLTDRDLVSFFRRIKQGLAPGAFLCLKENVSSSKKTVEDRNDSSVTRPLDSYEHFLKEAGFRIVRKVKQQNFPKGLFPVYMIACKPVSKE.

A disordered region spans residues 1–57 (MTTTLEEQLSDKLQMMDETTDKVQGSSKQKDDSSIAASSDAKTASPSSSDSSTKVAA). Residues 34-57 (SIAASSDAKTASPSSSDSSTKVAA) are compositionally biased toward low complexity. S-adenosyl-L-methionine contacts are provided by residues G114, R119, 136-138 (EQD), 167-168 (LQ), and Q182.

The protein belongs to the methyltransferase superfamily. NTM1 family.

The catalysed reaction is N-terminal L-alanyl-L-prolyl-L-lysyl-[protein] + 3 S-adenosyl-L-methionine = N-terminal N,N,N-trimethyl-L-alanyl-L-prolyl-L-lysyl-[protein] + 3 S-adenosyl-L-homocysteine + 3 H(+). It carries out the reaction N-terminal L-seryl-L-prolyl-L-lysyl-[protein] + 3 S-adenosyl-L-methionine = N-terminal N,N,N-trimethyl-L-seryl-L-prolyl-L-lysyl-[protein] + 3 S-adenosyl-L-homocysteine + 3 H(+). The enzyme catalyses N-terminal L-prolyl-L-prolyl-L-lysyl-[protein] + 2 S-adenosyl-L-methionine = N-terminal N,N-dimethyl-L-prolyl-L-prolyl-L-lysyl-[protein] + 2 S-adenosyl-L-homocysteine + 2 H(+). Its function is as follows. Alpha-N-methyltransferase that methylates the N-terminus of target proteins containing the N-terminal motif [Ala/Pro/Ser]-Pro-Lys when the initiator Met is cleaved. Specifically catalyzes mono-, di- or tri-methylation of exposed alpha-amino group of Ala or Ser residue in the [Ala/Ser]-Pro-Lys motif and mono- or di-methylation of Pro in the Pro-Pro-Lys motif. The chain is Alpha N-terminal protein methyltransferase 1 (Ntmt) from Drosophila melanogaster (Fruit fly).